Consider the following 288-residue polypeptide: Putative movement protein (288 aa).

The disordered stretch occupies residues 207-288 (TGPRATLSQP…TSSRSRRVRG (82 aa)).

Its function is as follows. Transports viral genome to neighboring plant cells directly through plasmosdesmata, without any budding. The movement protein allows efficient cell to cell propagation, by bypassing the host cell wall barrier (Potential). This chain is Putative movement protein, found in Cucumis melo (Muskmelon).